Here is a 477-residue protein sequence, read N- to C-terminus: Glycogen synthase (477 aa).

Lys15 contacts ADP-alpha-D-glucose.

It belongs to the glycosyltransferase 1 family. Bacterial/plant glycogen synthase subfamily.

It carries out the reaction [(1-&gt;4)-alpha-D-glucosyl](n) + ADP-alpha-D-glucose = [(1-&gt;4)-alpha-D-glucosyl](n+1) + ADP + H(+). The protein operates within glycan biosynthesis; glycogen biosynthesis. Synthesizes alpha-1,4-glucan chains using ADP-glucose. In Caldicellulosiruptor saccharolyticus (strain ATCC 43494 / DSM 8903 / Tp8T 6331), this protein is Glycogen synthase.